A 282-amino-acid chain; its full sequence is MAGAGLIIIKRRIKSITNTKKITNAMGLIATSNLRKSRQNLEANKAYYEAFNDVINKIVSSSSKSNLYVAGNKSDKKLYIALTSDSGLCGGFNGAVVTAADNVMRGDKDKSLLITVGQKGISYFKRLKYETLSEYVDIPNEPGLKEAKEIADRALSLYEKGEIGEVHVIYTQFLSTVNQKVEVKKVLPIEPKKMEKVSVAEFEPDAEIILEKAIRLHIEQQLFNLLLNSKASEQASRMSSMDSATKNANDLLDALNIKYNRIRQSAITQEITEIVGGAEALK.

Belongs to the ATPase gamma chain family. As to quaternary structure, F-type ATPases have 2 components, CF(1) - the catalytic core - and CF(0) - the membrane proton channel. CF(1) has five subunits: alpha(3), beta(3), gamma(1), delta(1), epsilon(1). CF(0) has three main subunits: a, b and c.

Its subcellular location is the cell membrane. Its function is as follows. Produces ATP from ADP in the presence of a proton gradient across the membrane. The gamma chain is believed to be important in regulating ATPase activity and the flow of protons through the CF(0) complex. The polypeptide is ATP synthase gamma chain (Clostridium acetobutylicum (strain ATCC 824 / DSM 792 / JCM 1419 / IAM 19013 / LMG 5710 / NBRC 13948 / NRRL B-527 / VKM B-1787 / 2291 / W)).